The chain runs to 462 residues: Putative ABC transporter A445L (462 aa).

The protein belongs to the protein kinase superfamily. ADCK protein kinase family.

The protein is Putative ABC transporter A445L of Chlorella (PBCV-1).